The following is a 284-amino-acid chain: tRNA pseudouridine synthase B (284 aa).

The active-site Nucleophile is the Asp40.

This sequence belongs to the pseudouridine synthase TruB family. Type 1 subfamily.

The catalysed reaction is uridine(55) in tRNA = pseudouridine(55) in tRNA. Functionally, responsible for synthesis of pseudouridine from uracil-55 in the psi GC loop of transfer RNAs. In Helicobacter hepaticus (strain ATCC 51449 / 3B1), this protein is tRNA pseudouridine synthase B.